We begin with the raw amino-acid sequence, 99 residues long: Aspartyl/glutamyl-tRNA(Asn/Gln) amidotransferase subunit C (99 aa).

It belongs to the GatC family. As to quaternary structure, heterotrimer of A, B and C subunits.

The catalysed reaction is L-glutamyl-tRNA(Gln) + L-glutamine + ATP + H2O = L-glutaminyl-tRNA(Gln) + L-glutamate + ADP + phosphate + H(+). It catalyses the reaction L-aspartyl-tRNA(Asn) + L-glutamine + ATP + H2O = L-asparaginyl-tRNA(Asn) + L-glutamate + ADP + phosphate + 2 H(+). Its function is as follows. Allows the formation of correctly charged Asn-tRNA(Asn) or Gln-tRNA(Gln) through the transamidation of misacylated Asp-tRNA(Asn) or Glu-tRNA(Gln) in organisms which lack either or both of asparaginyl-tRNA or glutaminyl-tRNA synthetases. The reaction takes place in the presence of glutamine and ATP through an activated phospho-Asp-tRNA(Asn) or phospho-Glu-tRNA(Gln). The chain is Aspartyl/glutamyl-tRNA(Asn/Gln) amidotransferase subunit C from Thermobifida fusca (strain YX).